We begin with the raw amino-acid sequence, 127 residues long: Large ribosomal subunit protein bL17 (127 aa).

Belongs to the bacterial ribosomal protein bL17 family. As to quaternary structure, part of the 50S ribosomal subunit. Contacts protein L32.

This is Large ribosomal subunit protein bL17 from Enterococcus faecalis (strain ATCC 700802 / V583).